Consider the following 635-residue polypeptide: Threonine--tRNA ligase (635 aa).

The region spanning 1 to 61 is the TGS domain; the sequence is MIKITLKDGK…HKDSSLEILT (61 aa). Residues 242-532 are catalytic; sequence DHRKLGKELD…LIEQYAGAFP (291 aa). Zn(2+) contacts are provided by cysteine 333, histidine 384, and histidine 509.

The protein belongs to the class-II aminoacyl-tRNA synthetase family. As to quaternary structure, homodimer. Zn(2+) serves as cofactor.

It is found in the cytoplasm. The catalysed reaction is tRNA(Thr) + L-threonine + ATP = L-threonyl-tRNA(Thr) + AMP + diphosphate + H(+). Catalyzes the attachment of threonine to tRNA(Thr) in a two-step reaction: L-threonine is first activated by ATP to form Thr-AMP and then transferred to the acceptor end of tRNA(Thr). Also edits incorrectly charged L-seryl-tRNA(Thr). In Clostridium botulinum (strain Kyoto / Type A2), this protein is Threonine--tRNA ligase.